The following is a 181-amino-acid chain: ATP synthase subunit b (181 aa).

The chain crosses the membrane as a helical span at residues 23–43 (FIHIPTFIYTALNLVILYFIL).

This sequence belongs to the ATPase B chain family. As to quaternary structure, F-type ATPases have 2 components, F(1) - the catalytic core - and F(0) - the membrane proton channel. F(1) has five subunits: alpha(3), beta(3), gamma(1), delta(1), epsilon(1). F(0) has three main subunits: a(1), b(2) and c(10-14). The alpha and beta chains form an alternating ring which encloses part of the gamma chain. F(1) is attached to F(0) by a central stalk formed by the gamma and epsilon chains, while a peripheral stalk is formed by the delta and b chains.

It is found in the cell membrane. Its function is as follows. F(1)F(0) ATP synthase produces ATP from ADP in the presence of a proton or sodium gradient. F-type ATPases consist of two structural domains, F(1) containing the extramembraneous catalytic core and F(0) containing the membrane proton channel, linked together by a central stalk and a peripheral stalk. During catalysis, ATP synthesis in the catalytic domain of F(1) is coupled via a rotary mechanism of the central stalk subunits to proton translocation. In terms of biological role, component of the F(0) channel, it forms part of the peripheral stalk, linking F(1) to F(0). This Acetivibrio thermocellus (strain ATCC 27405 / DSM 1237 / JCM 9322 / NBRC 103400 / NCIMB 10682 / NRRL B-4536 / VPI 7372) (Clostridium thermocellum) protein is ATP synthase subunit b.